We begin with the raw amino-acid sequence, 151 residues long: UPF0208 membrane protein YE1335 (151 aa).

2 consecutive transmembrane segments (helical) span residues 46–66 (FGIR…IALG) and 69–89 (LGPA…GLWW).

It belongs to the UPF0208 family.

It localises to the cell inner membrane. The polypeptide is UPF0208 membrane protein YE1335 (Yersinia enterocolitica serotype O:8 / biotype 1B (strain NCTC 13174 / 8081)).